A 343-amino-acid chain; its full sequence is Cytoplasmic tRNA 2-thiolation protein 1 (343 aa).

It belongs to the TtcA family. CTU1/NCS6/ATPBD3 subfamily.

It is found in the cytoplasm. It participates in tRNA modification; 5-methoxycarbonylmethyl-2-thiouridine-tRNA biosynthesis. Its function is as follows. Plays a central role in 2-thiolation of mcm(5)S(2)U at tRNA wobble positions of tRNA(Lys), tRNA(Glu) and tRNA(Gln). Directly binds tRNAs and probably acts by catalyzing adenylation of tRNAs, an intermediate required for 2-thiolation. It is unclear whether it acts as a sulfurtransferase that transfers sulfur from thiocarboxylated URM1 onto the uridine of tRNAs at wobble position. This Drosophila yakuba (Fruit fly) protein is Cytoplasmic tRNA 2-thiolation protein 1.